Reading from the N-terminus, the 271-residue chain is Co-chaperone protein DjlA (271 aa).

The Periplasmic portion of the chain corresponds to 1-6 (MQYWGK). The helical transmembrane segment at 7–31 (IIGVAVALLMGGGFWGVVLGLLIGH) threads the bilayer. At 32–271 (MFDKARSRKM…ELIKQQKGFK (240 aa)) the chain is on the cytoplasmic side. Residues 205–271 (DACNVLGVKP…ELIKQQKGFK (67 aa)) enclose the J domain.

Homodimer.

The protein resides in the cell inner membrane. Its function is as follows. Regulatory DnaK co-chaperone. Direct interaction between DnaK and DjlA is needed for the induction of the wcaABCDE operon, involved in the synthesis of a colanic acid polysaccharide capsule, possibly through activation of the RcsB/RcsC phosphotransfer signaling pathway. The colanic acid capsule may help the bacterium survive conditions outside the host. The chain is Co-chaperone protein DjlA from Escherichia coli (strain K12).